Here is a 1871-residue protein sequence, read N- to C-terminus: Plexin-A3 (1871 aa).

An N-terminal signal peptide occupies residues 1 to 19 (MPSVCLLLLLFLAVGGALG). Positions 20-488 (NRPFRAFVVT…SEKQVSQLPV (469 aa)) constitute a Sema domain. The Extracellular portion of the chain corresponds to 20 to 1220 (NRPFRAFVVT…SAERALTLPA (1201 aa)). Residue Asn-59 is glycosylated (N-linked (GlcNAc...) asparagine). Intrachain disulfides connect Cys-77-Cys-86, Cys-112-Cys-120, Cys-266-Cys-387, Cys-282-Cys-338, Cys-356-Cys-375, Cys-491-Cys-508, Cys-497-Cys-539, Cys-500-Cys-517, and Cys-511-Cys-523. The N-linked (GlcNAc...) asparagine glycan is linked to Asn-548. Cys-574 and Cys-594 are disulfide-bonded. 3 N-linked (GlcNAc...) asparagine glycosylation sites follow: Asn-637, Asn-738, and Asn-746. 4 consecutive IPT/TIG domains span residues 840-933 (PRIT…YSFV), 935-1020 (PTFD…YTYT), 1023-1122 (PTVT…FTYY), and 1125-1211 (PSFE…LHIS). Residues Asn-1009, Asn-1036, Asn-1073, Asn-1115, and Asn-1162 are each glycosylated (N-linked (GlcNAc...) asparagine). The helical transmembrane segment at 1221–1241 (MMGLAAGGGLLLLAITAVLVA) threads the bilayer. Topologically, residues 1242–1871 (YKRKTQDADR…QIISLVSSDS (630 aa)) are cytoplasmic. The residue at position 1596 (Ser-1596) is a Phosphoserine.

This sequence belongs to the plexin family. As to quaternary structure, interacts with CBFA2T3/MTG16.

It localises to the cell membrane. Coreceptor for SEMA3A and SEMA3F. Necessary for signaling by class 3 semaphorins and subsequent remodeling of the cytoskeleton. Plays a role in axon guidance in the developing nervous system. Regulates the migration of sympathetic neurons, but not of neural crest precursors. Required for normal dendrite spine morphology in pyramidal neurons. May play a role in regulating semaphorin-mediated programmed cell death in the developing nervous system. Class 3 semaphorins bind to a complex composed of a neuropilin and a plexin. The plexin modulates the affinity of the complex for specific semaphorins, and its cytoplasmic domain is required for the activation of down-stream signaling events in the cytoplasm. This is Plexin-A3 (PLXNA3) from Homo sapiens (Human).